A 293-amino-acid polypeptide reads, in one-letter code: CDP-abequose synthase (293 aa).

Threonine 113 is a substrate binding site. The active-site Proton acceptor is tyrosine 130.

Belongs to the NAD(P)-dependent epimerase/dehydratase family.

The enzyme catalyses CDP-alpha-D-abequose + NADP(+) = CDP-4-dehydro-3,6-dideoxy-alpha-D-glucose + NADPH + H(+). Its pathway is bacterial outer membrane biogenesis; LPS O-antigen biosynthesis. This chain is CDP-abequose synthase, found in Salmonella muenchen.